Reading from the N-terminus, the 69-residue chain is Sperm protamine P1 (69 aa).

The segment at 1–69 is disordered; the sequence is MARYRHSRSR…YSRRRRRRYY (69 aa).

This sequence belongs to the protamine P1 family. Testis.

Its subcellular location is the nucleus. The protein localises to the chromosome. In terms of biological role, protamines substitute for histones in the chromatin of sperm during the haploid phase of spermatogenesis. They compact sperm DNA into a highly condensed, stable and inactive complex. This Pseudochirops cupreus (Coppery ringtail) protein is Sperm protamine P1 (PRM1).